The sequence spans 204 residues: Urease accessory protein UreG (204 aa).

Position 11–18 (11–18) interacts with GTP; the sequence is GPVGAGKH.

It belongs to the SIMIBI class G3E GTPase family. UreG subfamily. Homodimer. UreD, UreF and UreG form a complex that acts as a GTP-hydrolysis-dependent molecular chaperone, activating the urease apoprotein by helping to assemble the nickel containing metallocenter of UreC. The UreE protein probably delivers the nickel.

The protein resides in the cytoplasm. In terms of biological role, facilitates the functional incorporation of the urease nickel metallocenter. This process requires GTP hydrolysis, probably effectuated by UreG. This Staphylococcus xylosus protein is Urease accessory protein UreG.